A 298-amino-acid chain; its full sequence is Glycine--tRNA ligase alpha subunit (298 aa).

It belongs to the class-II aminoacyl-tRNA synthetase family. In terms of assembly, tetramer of two alpha and two beta subunits.

The protein resides in the cytoplasm. The catalysed reaction is tRNA(Gly) + glycine + ATP = glycyl-tRNA(Gly) + AMP + diphosphate. The protein is Glycine--tRNA ligase alpha subunit of Helicobacter acinonychis (strain Sheeba).